The sequence spans 921 residues: Respiratory burst oxidase homolog protein D (921 aa).

Positions 1-71 (MKMRRGNSSN…RSNSVAGGRG (71 aa)) are disordered. Residues 1 to 376 (MKMRRGNSSN…KYFILDNWQR (376 aa)) are Cytoplasmic-facing. Ser-8, Ser-9, Ser-26, and Ser-39 each carry phosphoserine. Polar residues predominate over residues 21 to 31 (NSDTNSDTESI). The span at 44-53 (RPKRASKKNA) shows a compositional bias: basic residues. 2 EF-hand-like regions span residues 193–203 (SADSNGLLLSA) and 230–241 (NNVSGDAITKEQ). 2 EF-hand domains span residues 253-288 (SFDAKLQVFFDMVDKDEDGRVTEEEVAEIISLSASA) and 297-332 (QAKEYAALIMEELDPDNAGFIMIENLEMLLLQAPNQ). 5 residues coordinate Ca(2+): Asp-266, Asp-268, Asp-270, Arg-272, and Glu-277. Phosphoserine is present on residues Ser-339, Ser-343, and Ser-347. The helical transmembrane segment at 377–397 (LWIMMLWLGICGGLFTYKFIQ) threads the bilayer. At 398 to 461 (YKNKAAYGVM…FDDSLNFHKV (64 aa)) the chain is on the extracellular side. The region spanning 415 to 572 (KGGAETLKFN…LFIIVYALLI (158 aa)) is the Ferric oxidoreductase domain. Residues 462–482 (IASGIVVGVLLHAGAHLTCDF) form a helical membrane-spanning segment. Over 483-516 (PRLIAADEDTYEPMEKYFGDQPTSYWWFVKGVEG) the chain is Cytoplasmic. The chain crosses the membrane as a helical span at residues 517 to 537 (WTGIVMVVLMAIAFTLATPWF). Over 538–559 (RRNKLNLPNFLKKLTGFNAFWY) the chain is Extracellular. Residues 560-580 (THHLFIIVYALLIVHGIKLYL) traverse the membrane as a helical segment. The Cytoplasmic portion of the chain corresponds to 581–588 (TKIWYQKT). The chain crosses the membrane as a helical span at residues 589-606 (TWMYLAVPILLYASERLL). At 607–734 (RAFRSSIKPV…PYGAPAQDYK (128 aa)) the chain is on the extracellular side. The FAD-binding FR-type domain maps to 611–732 (SSIKPVKMIK…DGPYGAPAQD (122 aa)). The helical transmembrane segment at 735–755 (KYDVVLLVGLGIGATPMISIL) threads the bilayer. Topologically, residues 756–921 (KDIINNMKGP…TKFDFHKENF (166 aa)) are cytoplasmic.

It belongs to the RBOH (TC 5.B.1.3) family. In terms of assembly, monomer and homodimer. Interacts with BIK1 and FLS2. Interacts with PBL13. Binds to SIK1 upon flagellin perception and becomes activated by phosphorylation. Phosphorylated at Ser-39, Ser-343 and Ser-347 by BIK1 upon flagellin (flg22) treatment. Activated by phosphorylation at Ser-347 mediated by SIK1 and at Ser-8, Ser-9 and Ser-339 upon flagellin (e.g. flg22) perception. More abundant in roots than in leaves, stems or inflorescences. Expressed in mesophyll and guard cells.

The protein localises to the membrane. Inhibited by diphenylene iodinium (DPI). Its function is as follows. Calcium-dependent NADPH oxidase that generates superoxide. Involved in the generation of reactive oxygen species (ROS) during incompatible interactions with pathogens, in response to pathogen-associated molecular pattern (PAMP)-triggered immunity (PTI) signaling and in UV-B and abscisic acid ROS-dependent signaling and via SIK1 mediated activation by phosphorylation. Might be required for ROS signal amplification during light stress. In Arabidopsis thaliana (Mouse-ear cress), this protein is Respiratory burst oxidase homolog protein D.